We begin with the raw amino-acid sequence, 706 residues long: Fatty acid oxidation complex subunit alpha (706 aa).

The enoyl-CoA hydratase stretch occupies residues 1–188 (MDKSFTLNRL…KMGLVDDVVP (188 aa)). A 3-hydroxyacyl-CoA dehydrogenase region spans residues 308-706 (KAVNKVMVLG…MAESGSKFYE (399 aa)).

The protein in the N-terminal section; belongs to the enoyl-CoA hydratase/isomerase family. In the central section; belongs to the 3-hydroxyacyl-CoA dehydrogenase family. Heterotetramer of two alpha chains (FadJ) and two beta chains (FadI).

The protein resides in the cytoplasm. It catalyses the reaction a (3S)-3-hydroxyacyl-CoA = a (2E)-enoyl-CoA + H2O. The catalysed reaction is a 4-saturated-(3S)-3-hydroxyacyl-CoA = a (3E)-enoyl-CoA + H2O. The enzyme catalyses a (3S)-3-hydroxyacyl-CoA + NAD(+) = a 3-oxoacyl-CoA + NADH + H(+). It carries out the reaction (3S)-3-hydroxybutanoyl-CoA = (3R)-3-hydroxybutanoyl-CoA. It participates in lipid metabolism; fatty acid beta-oxidation. Catalyzes the formation of a hydroxyacyl-CoA by addition of water on enoyl-CoA. Also exhibits 3-hydroxyacyl-CoA epimerase and 3-hydroxyacyl-CoA dehydrogenase activities. The sequence is that of Fatty acid oxidation complex subunit alpha from Shewanella loihica (strain ATCC BAA-1088 / PV-4).